Here is a 437-residue protein sequence, read N- to C-terminus: 3-phosphoshikimate 1-carboxyvinyltransferase (437 aa).

Residues Lys21, Ser22, and Arg26 each coordinate 3-phosphoshikimate. Lys21 serves as a coordination point for phosphoenolpyruvate. Positions 101 and 129 each coordinate phosphoenolpyruvate. 3-phosphoshikimate contacts are provided by Ser172, Ser173, Gln174, Ser200, Asp314, and Lys341. Gln174 is a phosphoenolpyruvate binding site. Asp314 serves as the catalytic Proton acceptor. Phosphoenolpyruvate-binding residues include Arg345, Arg388, and Lys414.

This sequence belongs to the EPSP synthase family. Monomer.

The protein localises to the cytoplasm. The enzyme catalyses 3-phosphoshikimate + phosphoenolpyruvate = 5-O-(1-carboxyvinyl)-3-phosphoshikimate + phosphate. It functions in the pathway metabolic intermediate biosynthesis; chorismate biosynthesis; chorismate from D-erythrose 4-phosphate and phosphoenolpyruvate: step 6/7. Functionally, catalyzes the transfer of the enolpyruvyl moiety of phosphoenolpyruvate (PEP) to the 5-hydroxyl of shikimate-3-phosphate (S3P) to produce enolpyruvyl shikimate-3-phosphate and inorganic phosphate. This Clostridioides difficile (strain 630) (Peptoclostridium difficile) protein is 3-phosphoshikimate 1-carboxyvinyltransferase.